The primary structure comprises 317 residues: L-lactate dehydrogenase (317 aa).

Valine 16, aspartate 37, and tyrosine 68 together coordinate NAD(+). Substrate contacts are provided by residues glutamine 85, arginine 91, 123–126 (NPCD), and 151–154 (DSAR). Residue 121-123 (ASN) participates in NAD(+) binding. The Proton acceptor role is filled by histidine 178. Tyrosine 222 bears the Phosphotyrosine mark. Residue threonine 231 coordinates substrate.

It belongs to the LDH/MDH superfamily. LDH family. In terms of assembly, homotetramer.

The protein resides in the cytoplasm. It carries out the reaction (S)-lactate + NAD(+) = pyruvate + NADH + H(+). It participates in fermentation; pyruvate fermentation to lactate; (S)-lactate from pyruvate: step 1/1. Catalyzes the conversion of lactate to pyruvate. This chain is L-lactate dehydrogenase, found in Mesoplasma florum (strain ATCC 33453 / NBRC 100688 / NCTC 11704 / L1) (Acholeplasma florum).